The sequence spans 267 residues: Cilia- and flagella-associated protein 300 (267 aa).

The protein belongs to the CFAP300 family. As to quaternary structure, interacts with DNAAF2.

Its subcellular location is the cytoplasm. It is found in the cytoskeleton. The protein localises to the cilium axoneme. Its function is as follows. Cilium- and flagellum-specific protein that plays a role in axonemal structure organization and motility. May play a role in outer and inner dynein arm assembly. The chain is Cilia- and flagella-associated protein 300 from Bos taurus (Bovine).